Here is a 317-residue protein sequence, read N- to C-terminus: Melanocyte-stimulating hormone receptor (317 aa).

The Extracellular segment spans residues Met-1–Glu-37. The N-linked (GlcNAc...) asparagine glycan is linked to Asn-29. Residues Val-38–Ile-63 traverse the membrane as a helical segment. At Ala-64–Pro-72 the chain is on the cytoplasmic side. A helical membrane pass occupies residues Thr-73–Leu-93. Residues Glu-94–Asn-118 lie on the Extracellular side of the membrane. Residues Val-119–Met-140 form a helical membrane-spanning segment. The Cytoplasmic segment spans residues Asp-141–Gln-163. Residues Ala-164–Tyr-183 form a helical membrane-spanning segment. Over Asp-184–Cys-191 the chain is Extracellular. The chain crosses the membrane as a helical span at residues Leu-192–Leu-211. Over Ala-212–Ala-240 the chain is Cytoplasmic. Residues Val-241–Leu-266 form a helical membrane-spanning segment. The Extracellular portion of the chain corresponds to Cys-267 to Asn-279. A helical transmembrane segment spans residues Phe-280–Phe-300. The Cytoplasmic segment spans residues Arg-301 to Trp-317. A lipid anchor (S-palmitoyl cysteine) is attached at Cys-315.

It belongs to the G-protein coupled receptor 1 family. In terms of assembly, interacts with MGRN1, but does not undergo MGRN1-mediated ubiquitination; this interaction competes with GNAS-binding and thus inhibits agonist-induced cAMP production. Interacts with OPN3; the interaction results in a decrease in MC1R-mediated cAMP signaling and ultimately a decrease in melanin production in melanocytes.

Its subcellular location is the cell membrane. Functionally, receptor for MSH (alpha, beta and gamma) and ACTH. The activity of this receptor is mediated by G proteins which activate adenylate cyclase. Mediates melanogenesis, the production of eumelanin (black/brown) and phaeomelanin (red/yellow), via regulation of cAMP signaling in melanocytes. The protein is Melanocyte-stimulating hormone receptor (MC1R) of Hylobates lar (Lar gibbon).